The chain runs to 430 residues: RPM1 interacting protein 13 (430 aa).

Positions 1-21 are disordered; sequence MGSGNHVDIVDVSSGEEDVDT. A nuclear localization region spans residues 231-300; that stretch reads RHRIRQPIPH…QVSQSSHHSS (70 aa).

As to quaternary structure, interacts with RPM1 (via its NB-ARC domain). Binds to ARF1 in the nucleus.

It localises to the nucleus. Its function is as follows. Resistance protein interactor which positively enhances RPM1-mediated resistance to necrotrophic bacterial pathogens Pseudomonas syringae pv. tomato DC3000 harboring type III effector protein AvrRpm1 or AvrB, but prevents the hypersensitive response (HR) controlled by RPM1. Together with ARF1, promotes leaf senescence and cell death, probably by facilitating the translocation of ARF1 into the nucleus, and activates ROS-related enzymes (e.g. POD, CAT and SOD). The protein is RPM1 interacting protein 13 of Arabidopsis thaliana (Mouse-ear cress).